We begin with the raw amino-acid sequence, 193 residues long: Ion-translocating oxidoreductase complex subunit A (193 aa).

A run of 6 helical transmembrane segments spans residues 5-25 (LLLF…FLGL), 47-67 (FVMT…LVPL), 72-92 (LRTM…EMVV), 102-122 (LLGI…VALL), 134-154 (ALYG…FAAI), and 171-191 (AIAL…SGLV).

It belongs to the NqrDE/RnfAE family. In terms of assembly, the complex is composed of six subunits: RnfA, RnfB, RnfC, RnfD, RnfE and RnfG.

The protein localises to the cell inner membrane. Functionally, part of a membrane-bound complex that couples electron transfer with translocation of ions across the membrane. The protein is Ion-translocating oxidoreductase complex subunit A of Cronobacter sakazakii (strain ATCC BAA-894) (Enterobacter sakazakii).